A 365-amino-acid polypeptide reads, in one-letter code: Alanine racemase (365 aa).

The active-site Proton acceptor; specific for D-alanine is Lys-35. Position 35 is an N6-(pyridoxal phosphate)lysine (Lys-35). Arg-130 contributes to the substrate binding site. Tyr-256 (proton acceptor; specific for L-alanine) is an active-site residue. Substrate is bound at residue Met-304.

Belongs to the alanine racemase family. The cofactor is pyridoxal 5'-phosphate.

It carries out the reaction L-alanine = D-alanine. It participates in amino-acid biosynthesis; D-alanine biosynthesis; D-alanine from L-alanine: step 1/1. In terms of biological role, catalyzes the interconversion of L-alanine and D-alanine. May also act on other amino acids. In Acidovorax ebreus (strain TPSY) (Diaphorobacter sp. (strain TPSY)), this protein is Alanine racemase (alr).